The sequence spans 367 residues: UDP-N-acetylglucosamine--N-acetylmuramyl-(pentapeptide) pyrophosphoryl-undecaprenol N-acetylglucosamine transferase (367 aa).

Residues Thr-15–Gly-17, Asn-127, Arg-163, Ser-191, Ile-249, and Gln-294 contribute to the UDP-N-acetyl-alpha-D-glucosamine site.

It belongs to the glycosyltransferase 28 family. MurG subfamily.

It localises to the cell inner membrane. It catalyses the reaction di-trans,octa-cis-undecaprenyl diphospho-N-acetyl-alpha-D-muramoyl-L-alanyl-D-glutamyl-meso-2,6-diaminopimeloyl-D-alanyl-D-alanine + UDP-N-acetyl-alpha-D-glucosamine = di-trans,octa-cis-undecaprenyl diphospho-[N-acetyl-alpha-D-glucosaminyl-(1-&gt;4)]-N-acetyl-alpha-D-muramoyl-L-alanyl-D-glutamyl-meso-2,6-diaminopimeloyl-D-alanyl-D-alanine + UDP + H(+). It participates in cell wall biogenesis; peptidoglycan biosynthesis. Its function is as follows. Cell wall formation. Catalyzes the transfer of a GlcNAc subunit on undecaprenyl-pyrophosphoryl-MurNAc-pentapeptide (lipid intermediate I) to form undecaprenyl-pyrophosphoryl-MurNAc-(pentapeptide)GlcNAc (lipid intermediate II). In Burkholderia ambifaria (strain MC40-6), this protein is UDP-N-acetylglucosamine--N-acetylmuramyl-(pentapeptide) pyrophosphoryl-undecaprenol N-acetylglucosamine transferase.